The chain runs to 228 residues: Cytidylate kinase (228 aa).

17 to 25 serves as a coordination point for ATP; sequence GPTASGKGT.

It belongs to the cytidylate kinase family. Type 1 subfamily.

It is found in the cytoplasm. The catalysed reaction is CMP + ATP = CDP + ADP. It catalyses the reaction dCMP + ATP = dCDP + ADP. The polypeptide is Cytidylate kinase (Burkholderia ambifaria (strain MC40-6)).